The following is a 398-amino-acid chain: MKVLVLNCGSSSVKYKLLEMPKGDVLAQGGVEKLGLPGSFLKLTMPNGEKVVLEKDMPEHTIAVEFILSVLKDDKYGCIKSYEEIDAVGHRLVHGGEKFSNSVEITPEVIAKVEECIPLAPLHNPANLKGVVAIEKLLPGIRQVGVFDTAFFQTMPEHVYRYALPYDMCNKHGVRRYGFHGTSHRYVSARACEILGLDYDKTRIITAHIGNGASIAAIKNGKALDVSLGMTPVEGLMMGTRSGDVDPGVLTFLMEAEGLQAAGISELINKKSGVLGVSGVSSDLREIEDAIKNGNERATLAMTMYDYRIKKYVGAYAAAMGGVDVLVFTGGVGENQYTTREKVCTDMEFMGIVFDSKVNEGMRGKEMVISKPESKVTVIVVPTDEEYMIASDTMTILK.

Asn-7 provides a ligand contact to Mg(2+). Lys-14 serves as a coordination point for ATP. Position 91 (Arg-91) interacts with substrate. Asp-148 functions as the Proton donor/acceptor in the catalytic mechanism. Residues His-208 to Gly-212, Asp-283 to Arg-285, and Gly-331 to Asn-335 contribute to the ATP site. Glu-385 is a Mg(2+) binding site.

This sequence belongs to the acetokinase family. Homodimer. The cofactor is Mg(2+). Requires Mn(2+) as cofactor.

It is found in the cytoplasm. The catalysed reaction is acetate + ATP = acetyl phosphate + ADP. The protein operates within metabolic intermediate biosynthesis; acetyl-CoA biosynthesis; acetyl-CoA from acetate: step 1/2. Catalyzes the formation of acetyl phosphate from acetate and ATP. Can also catalyze the reverse reaction. This chain is Acetate kinase, found in Porphyromonas gingivalis (strain ATCC 33277 / DSM 20709 / CIP 103683 / JCM 12257 / NCTC 11834 / 2561).